The chain runs to 258 residues: Probable pectin methylesterase CGR3 (258 aa).

At Met-1–Pro-29 the chain is on the cytoplasmic side. The chain crosses the membrane as a helical span at residues Leu-30–Gly-50. Topologically, residues Pro-51–His-258 are lumenal. Asn-171 carries an N-linked (GlcNAc...) asparagine glycan.

The protein belongs to the class I-like SAM-binding methyltransferase superfamily.

Its subcellular location is the golgi apparatus membrane. Functionally, together with CGR2, required for homogalacturonan pectins (HG) methylesterification in the Golgi apparatus prior to integration into cell walls, essential for general growth and development. Promotes petiole elongation. Impacts photosynthesis and respiration efficiency by influencing leaf mesophyll morphology and physiology; pectin methylesterification modulates both expansion and positioning of cells in leaves, probably by changing cell walls plasticity. This Arabidopsis thaliana (Mouse-ear cress) protein is Probable pectin methylesterase CGR3.